The chain runs to 276 residues: Diacetylchitobiose uptake system permease protein DasC (276 aa).

The next 6 membrane-spanning stretches (helical) occupy residues 14-34, 74-94, 105-125, 137-157, 186-206, and 241-261; these read TAVV…ATAF, LIVT…GSFA, GFIV…VIAI, SLVP…ILTL, VILP…FITA, and GATM…FVYL. The ABC transmembrane type-1 domain occupies 70 to 261; that stretch reads VSNSLIVTVC…IPILILFVYL (192 aa).

Belongs to the binding-protein-dependent transport system permease family. As to quaternary structure, the complex is composed of two ATP-binding proteins (MsiK), two transmembrane proteins (DasB and DasC) and a solute-binding protein (DasA).

Its subcellular location is the cell membrane. Part of the ABC transporter complex DasABC-MsiK involved in N,N'-diacetylchitobiose ((GlcNAc)2) uptake. Responsible for the translocation of the substrate across the membrane. This is Diacetylchitobiose uptake system permease protein DasC from Streptomyces coelicolor (strain ATCC BAA-471 / A3(2) / M145).